The following is a 257-amino-acid chain: MTGTRTFFVGGNHKMNGSKSMLESLSKGMNESVENKENVDIFIAPSYPYLEFLSNKLDNKKFKVCSQNCYSVAKGAFTGEISANMLVDLGIPYVIIGHSERRNVFSESSELITKKTKYAISLGLTVILCLGELLADRKSNNTEHILSEQLKDFASFTPEEWSKIVIAYEPVWAIGTGAVATPQEAQDTHVFIRKWISEKVSEDVAKKTSIMYGGSVNADNCHNLSKQSDIDGFLVGGASLVASDFIAIIKSAVPKKY.

Residues Asn-12 and Lys-14 each coordinate substrate. His-98 acts as the Electrophile in catalysis. Glu-169 functions as the Proton acceptor in the catalytic mechanism.

Belongs to the triosephosphate isomerase family. In terms of assembly, homodimer.

The catalysed reaction is D-glyceraldehyde 3-phosphate = dihydroxyacetone phosphate. It functions in the pathway carbohydrate biosynthesis; gluconeogenesis. It participates in carbohydrate degradation; glycolysis; D-glyceraldehyde 3-phosphate from glycerone phosphate: step 1/1. The protein is Triosephosphate isomerase (tpiA) of Dictyostelium discoideum (Social amoeba).